A 717-amino-acid chain; its full sequence is CRISPR-associated protein Cas8b (717 aa).

Disordered stretches follow at residues 263 to 283 and 698 to 717; these read IGVF…DQSW and HEKE…STTN. The span at 701–717 shows a compositional bias: acidic residues; sequence EDEDDQDTEEPAESTTN.

It is found in the cytoplasm. Its function is as follows. CRISPR (clustered regularly interspaced short palindromic repeat) is an adaptive immune system that provides protection against mobile genetic elements (viruses, transposable elements and conjugative plasmids). CRISPR clusters contain sequences complementary to antecedent mobile elements and target invading nucleic acids. CRISPR clusters are transcribed and processed into CRISPR RNA (crRNA). Plasmid targeted by CRISPR locus P1 transform wild-type cells very poorly. This subunit might be involved in stabilizing crRNA. This is CRISPR-associated protein Cas8b from Haloferax volcanii (strain ATCC 29605 / DSM 3757 / JCM 8879 / NBRC 14742 / NCIMB 2012 / VKM B-1768 / DS2) (Halobacterium volcanii).